Consider the following 370-residue polypeptide: Queuine tRNA-ribosyltransferase (370 aa).

Asp89 functions as the Proton acceptor in the catalytic mechanism. Substrate-binding positions include Asp89–Phe93, Asp143, and Gly214. An RNA binding region spans residues Gly245–Asp251. Asp264 serves as the catalytic Nucleophile. The interval Thr269–Arg273 is RNA binding; important for wobble base 34 recognition. 4 residues coordinate Zn(2+): Cys302, Cys304, Cys307, and His333.

Belongs to the queuine tRNA-ribosyltransferase family. In terms of assembly, homodimer. Within each dimer, one monomer is responsible for RNA recognition and catalysis, while the other monomer binds to the replacement base PreQ1. The cofactor is Zn(2+).

It catalyses the reaction 7-aminomethyl-7-carbaguanine + guanosine(34) in tRNA = 7-aminomethyl-7-carbaguanosine(34) in tRNA + guanine. The protein operates within tRNA modification; tRNA-queuosine biosynthesis. In terms of biological role, catalyzes the base-exchange of a guanine (G) residue with the queuine precursor 7-aminomethyl-7-deazaguanine (PreQ1) at position 34 (anticodon wobble position) in tRNAs with GU(N) anticodons (tRNA-Asp, -Asn, -His and -Tyr). Catalysis occurs through a double-displacement mechanism. The nucleophile active site attacks the C1' of nucleotide 34 to detach the guanine base from the RNA, forming a covalent enzyme-RNA intermediate. The proton acceptor active site deprotonates the incoming PreQ1, allowing a nucleophilic attack on the C1' of the ribose to form the product. After dissociation, two additional enzymatic reactions on the tRNA convert PreQ1 to queuine (Q), resulting in the hypermodified nucleoside queuosine (7-(((4,5-cis-dihydroxy-2-cyclopenten-1-yl)amino)methyl)-7-deazaguanosine). This is Queuine tRNA-ribosyltransferase from Buchnera aphidicola subsp. Acyrthosiphon pisum (strain 5A).